The following is a 787-amino-acid chain: Dolichyl-diphosphooligosaccharide--protein glycosyltransferase subunit STT3A (787 aa).

The Cytoplasmic segment spans residues 1-18; that stretch reads MAEPESSTAAAGGSRLRN. A helical membrane pass occupies residues 19–39; sequence ACGGVLCAFTLLLIGVLAFSI. Topologically, residues 40–125 are lumenal; sequence RLFSVIKYES…LSVETVCVFT (86 aa). Positions 53-55 match the DXD motif 1 motif; the sequence is EFD. Asp55 serves as a coordination point for Mn(2+). Residues 126-144 traverse the membrane as a helical segment; it reads APIFSANASWATYLLTKEA. The Cytoplasmic portion of the chain corresponds to 145 to 146; sequence KG. A helical membrane pass occupies residues 147–164; it reads TGAGLMAAAILAMVPSYI. The Lumenal segment spans residues 165-175; the sequence is SRSVAGSYDNE. Residues Asp173 and Glu175 each coordinate Mn(2+). The short motif at 173 to 175 is the DXD motif 2 element; sequence DNE. Residues 176-195 form a helical membrane-spanning segment; it reads AVAIFALIFTFYLYVKTLNT. The Cytoplasmic portion of the chain corresponds to 196–197; that stretch reads GS. A helical membrane pass occupies residues 198–212; that stretch reads LFYATLNALSYFYMV. Over 213-217 the chain is Lumenal; the sequence is CSWGG. A helical membrane pass occupies residues 218 to 234; the sequence is YTFIINLIPIHVLLCIV. The Cytoplasmic segment spans residues 235-239; sequence TGRYS. The chain crosses the membrane as a helical span at residues 240–265; sequence SRLYIAYAPLVILGTLLAALVPVVGF. The Lumenal segment spans residues 266-273; it reads NAVMTSEH. The helical transmembrane segment at 274 to 293 threads the bilayer; that stretch reads FASFLVFIILHVVALVYYIK. Residues 294 to 306 lie on the Cytoplasmic side of the membrane; that stretch reads GLLTPRLFKVAMT. A helical transmembrane segment spans residues 307–327; the sequence is LVITVGLAVCFAVIAILIALV. Over 328–365 the chain is Lumenal; sequence ASSPTKGWSGRSLSLLDPTYASKYIPIIASVSEHQPPT. The SVSE motif signature appears at 357–360; the sequence is SVSE. A helical transmembrane segment spans residues 366-388; sequence WPSYFMDINVLAFLIPAGIISCF. Residues 389–394 are Cytoplasmic-facing; sequence LPLSDA. The chain crosses the membrane as a helical span at residues 395–411; it reads SSFVVLYLVTAVYFSGV. The Lumenal segment spans residues 412 to 415; sequence MVRL. Dolichyl diphosphooligosaccharide is bound at residue Arg414. Residues 416-437 traverse the membrane as a helical segment; the sequence is MLVLAPAACILSGIALSEAFDV. Residues 438 to 525 lie on the Cytoplasmic side of the membrane; that stretch reads LTRSVKYQLS…KLLVLPMEAS (88 aa). Over residues 453–475 the composition is skewed to low complexity; sequence SPAASGDSSAESSSASTVSTNSA. A disordered region spans residues 453 to 507; it reads SPAASGDSSAESSSASTVSTNSAKNETRPEKTETAPKEKPSKKNRKKEKEVAESV. The span at 477–504 shows a compositional bias: basic and acidic residues; that stretch reads NETRPEKTETAPKEKPSKKNRKKEKEVA. A helical membrane pass occupies residues 526-546; sequence VLGILLLIVLGGFYVVHCVWA. Topologically, residues 547 to 787 are lumenal; the sequence is AAEAYSAPSI…AAGRKKNPWQ (241 aa). The tract at residues 592-594 is interacts with target acceptor peptide in protein substrate; the sequence is WWD. A WWDYG motif motif is present at residues 592–596; sequence WWDYG. Tyr597 contributes to the dolichyl diphosphooligosaccharide binding site. Asn604 and Asn611 each carry an N-linked (GlcNAc...) asparagine glycan. N-linked (GlcNAc...) (high mannose) asparagine glycosylation is present at Asn615. Residues 659–666 carry the DK motif motif; it reads DINKFLWM. Basic residues predominate over residues 759 to 769; it reads RVRGKLKKLKS. The disordered stretch occupies residues 759-787; the sequence is RVRGKLKKLKSGSKASSTNAAGRKKNPWQ.

It belongs to the STT3 family. In terms of assembly, component of the oligosaccharyltransferase (OST) complex. The cofactor is Mg(2+). Mn(2+) is required as a cofactor.

The protein resides in the endoplasmic reticulum membrane. The enzyme catalyses a di-trans,poly-cis-dolichyl diphosphooligosaccharide + L-asparaginyl-[protein] = N(4)-(oligosaccharide-(1-&gt;4)-N-acetyl-beta-D-glucosaminyl-(1-&gt;4)-N-acetyl-beta-D-glucosaminyl)-L-asparaginyl-[protein] + a di-trans,poly-cis-dolichyl diphosphate + H(+). Its pathway is protein modification; protein glycosylation. Functionally, catalytic subunit of the oligosaccharyl transferase (OST) complex that catalyzes the initial transfer of a defined glycan (Glc(3)Man(9)GlcNAc(2) in eukaryotes) from the lipid carrier dolichol-pyrophosphate to an asparagine residue within an Asn-X-Ser/Thr consensus motif in nascent polypeptide chains, the first step in protein N-glycosylation. N-glycosylation occurs cotranslationally and the complex associates with the Sec61 complex at the channel-forming translocon complex that mediates protein translocation across the endoplasmic reticulum (ER). All subunits are required for a maximal enzyme activity. This subunit contains the active site and the acceptor peptide and donor lipid-linked oligosaccharide (LLO) binding pockets. In Oryza sativa subsp. japonica (Rice), this protein is Dolichyl-diphosphooligosaccharide--protein glycosyltransferase subunit STT3A (STT3A).